The following is a 174-amino-acid chain: Alpha-crystallin B chain (174 aa).

Residue Met-1 is modified to N-acetylmethionine. Residues Arg-55–Glu-163 enclose the sHSP domain. 4 residues coordinate Zn(2+): His-82, His-103, Glu-105, and His-110. The tract at residues Arg-148–Lys-174 is disordered. Residues Lys-149–Pro-166 show a composition bias toward basic and acidic residues.

It belongs to the small heat shock protein (HSP20) family. Heteromer composed of three CRYAA and one CRYAB subunits. Aggregates with homologous proteins, including the small heat shock protein HSPB1, to form large heteromeric complexes. Inter-subunit bridging via zinc ions enhances stability, which is crucial as there is no protein turn over in the lens. In terms of tissue distribution, lens as well as other tissues.

In terms of biological role, may contribute to the transparency and refractive index of the lens. The chain is Alpha-crystallin B chain (CRYAB) from Gallus gallus (Chicken).